Reading from the N-terminus, the 396-residue chain is S-adenosylmethionine synthase (396 aa).

Histidine 16 serves as a coordination point for ATP. Aspartate 18 contributes to the Mg(2+) binding site. Glutamate 44 serves as a coordination point for K(+). Positions 57 and 100 each coordinate L-methionine. The segment at 100–110 (QSPDIAQGVDR) is flexible loop. Residues 167 to 169 (DAK), 233 to 234 (RF), aspartate 242, 248 to 249 (RK), alanine 265, and lysine 269 each bind ATP. Aspartate 242 lines the L-methionine pocket. Residue lysine 273 participates in L-methionine binding.

The protein belongs to the AdoMet synthase family. In terms of assembly, homotetramer; dimer of dimers. Requires Mg(2+) as cofactor. K(+) serves as cofactor.

The protein localises to the cytoplasm. It carries out the reaction L-methionine + ATP + H2O = S-adenosyl-L-methionine + phosphate + diphosphate. The protein operates within amino-acid biosynthesis; S-adenosyl-L-methionine biosynthesis; S-adenosyl-L-methionine from L-methionine: step 1/1. Its function is as follows. Catalyzes the formation of S-adenosylmethionine (AdoMet) from methionine and ATP. The overall synthetic reaction is composed of two sequential steps, AdoMet formation and the subsequent tripolyphosphate hydrolysis which occurs prior to release of AdoMet from the enzyme. The protein is S-adenosylmethionine synthase of Paraburkholderia xenovorans (strain LB400).